Reading from the N-terminus, the 477-residue chain is Bifunctional protein HldE (477 aa).

Residues 1–318 (MKVTLPEFER…ENAVRGRAET (318 aa)) form a ribokinase region. 195–198 (NLSE) contributes to the ATP binding site. The active site involves Asp-264. The cytidylyltransferase stretch occupies residues 344–477 (MTNGVFDILH…IKKIQKDSDK (134 aa)).

It in the N-terminal section; belongs to the carbohydrate kinase PfkB family. This sequence in the C-terminal section; belongs to the cytidylyltransferase family. Homodimer.

The enzyme catalyses D-glycero-beta-D-manno-heptose 7-phosphate + ATP = D-glycero-beta-D-manno-heptose 1,7-bisphosphate + ADP + H(+). It catalyses the reaction D-glycero-beta-D-manno-heptose 1-phosphate + ATP + H(+) = ADP-D-glycero-beta-D-manno-heptose + diphosphate. It functions in the pathway nucleotide-sugar biosynthesis; ADP-L-glycero-beta-D-manno-heptose biosynthesis; ADP-L-glycero-beta-D-manno-heptose from D-glycero-beta-D-manno-heptose 7-phosphate: step 1/4. Its pathway is nucleotide-sugar biosynthesis; ADP-L-glycero-beta-D-manno-heptose biosynthesis; ADP-L-glycero-beta-D-manno-heptose from D-glycero-beta-D-manno-heptose 7-phosphate: step 3/4. Catalyzes the phosphorylation of D-glycero-D-manno-heptose 7-phosphate at the C-1 position to selectively form D-glycero-beta-D-manno-heptose-1,7-bisphosphate. In terms of biological role, catalyzes the ADP transfer from ATP to D-glycero-beta-D-manno-heptose 1-phosphate, yielding ADP-D-glycero-beta-D-manno-heptose. The polypeptide is Bifunctional protein HldE (Klebsiella pneumoniae (strain 342)).